The sequence spans 509 residues: ATP synthase subunit alpha (509 aa).

171–178 (GDRQTGKT) contacts ATP.

This sequence belongs to the ATPase alpha/beta chains family. As to quaternary structure, F-type ATPases have 2 components, CF(1) - the catalytic core - and CF(0) - the membrane proton channel. CF(1) has five subunits: alpha(3), beta(3), gamma(1), delta(1), epsilon(1). CF(0) has three main subunits: a(1), b(2) and c(9-12). The alpha and beta chains form an alternating ring which encloses part of the gamma chain. CF(1) is attached to CF(0) by a central stalk formed by the gamma and epsilon chains, while a peripheral stalk is formed by the delta and b chains.

Its subcellular location is the cell inner membrane. It carries out the reaction ATP + H2O + 4 H(+)(in) = ADP + phosphate + 5 H(+)(out). Functionally, produces ATP from ADP in the presence of a proton gradient across the membrane. The alpha chain is a regulatory subunit. This Neorickettsia sennetsu (strain ATCC VR-367 / Miyayama) (Ehrlichia sennetsu) protein is ATP synthase subunit alpha.